A 172-amino-acid polypeptide reads, in one-letter code: Male-specific submandibular salivary gland protein (172 aa).

Positions 1-15 are cleaved as a signal peptide; it reads MVKFLLLALALGVSC. A glycan (N-linked (GlcNAc...) asparagine) is linked at N41. 2 disulfides stabilise this stretch: C60–C64 and C79–C170.

The protein belongs to the calycin superfamily. Lipocalin family. N-glycosylated. In terms of tissue distribution, expressed in acinar cells of the submandibular salivary gland from where it is secreted into saliva (at protein level). Also released from the submandibular salivary gland into blood and excreted in urine (at protein level). Expressed in the lacrimal gland from where it is secreted into tears (at protein level).

The protein localises to the secreted. Its subcellular location is the cytoplasm. In Mesocricetus auratus (Golden hamster), this protein is Male-specific submandibular salivary gland protein.